A 315-amino-acid chain; its full sequence is Homeobox-leucine zipper protein HAT3 (315 aa).

The tract at residues 140–163 (SCSLGGGSDDEDGSGNGDDSSRKK) is disordered. Positions 159-218 (SSRKKLRLSKEQALVLEETFKEHSTLNPKQKMALAKQLNLRTRQVEVWFQNRRARTKLKQ) form a DNA-binding region, homeobox. Residues 226-247 (LKRCCENLTDENRRLQKEVSEL) are leucine-zipper. The span at 280–305 (SSSSVAPPVMNSSSPMGPMSPWAAMP) shows a compositional bias: low complexity. Positions 280 to 315 (SSSSVAPPVMNSSSPMGPMSPWAAMPLRQRPAAGSH) are disordered.

It belongs to the HD-ZIP homeobox family. Class II subfamily.

It is found in the nucleus. Functionally, probable transcription factor. This Arabidopsis thaliana (Mouse-ear cress) protein is Homeobox-leucine zipper protein HAT3 (HAT3).